Consider the following 96-residue polypeptide: Exopolysaccharide production repressor protein (96 aa).

2 helical membrane passes run 6–26 (FVVS…FLTG) and 35–55 (TLLC…FLVW). Residues 64–96 (LSPGQLPADPTNDEKQTGKLSLRRLNRPPHFNS) are disordered.

It localises to the cell membrane. The protein operates within glycan metabolism; exopolysaccharide biosynthesis. In terms of biological role, inhibition of exopolysaccharide synthesis (EPS) and nodulation ability (NOD). The sequence is that of Exopolysaccharide production repressor protein (exoX) from Sinorhizobium fredii (strain NBRC 101917 / NGR234).